A 153-amino-acid polypeptide reads, in one-letter code: MAQEIRAIVRIGDTDLDGNKTVAYALAKIRGIGIATAYAICRKLGIDPHATLGLLPEDQINKLDWAVRNLHELAPAWFLNRRKDPETGRDLHLIGSELVLAAKRDVDLMKKLKSWKGIRHSLGLKVRGQRTVTTGRFGATAGVTKKKAAPGGK.

Belongs to the universal ribosomal protein uS13 family. In terms of assembly, part of the 30S ribosomal subunit. Forms a loose heterodimer with protein S19. Forms two bridges to the 50S subunit in the 70S ribosome.

Located at the top of the head of the 30S subunit, it contacts several helices of the 16S rRNA. In the 70S ribosome it contacts the 23S rRNA (bridge B1a) and protein L5 of the 50S subunit (bridge B1b), connecting the 2 subunits; these bridges are implicated in subunit movement. This is Small ribosomal subunit protein uS13 from Pyrobaculum calidifontis (strain DSM 21063 / JCM 11548 / VA1).